The sequence spans 405 residues: Acetyl-CoA decarbonylase/synthase complex subunit delta (405 aa).

The protein belongs to the CdhD family. As to quaternary structure, heterodimer of delta and gamma chains. The ACDS complex is made up of alpha, epsilon, beta, gamma and delta chains with a probable stoichiometry of (alpha(2)epsilon(2))(4)-beta(8)-(gamma(1)delta(1))(8).

Part of a complex that catalyzes the reversible cleavage of acetyl-CoA, allowing autotrophic growth from CO(2). Probably maintains the overall quaternary structure of the ACDS complex. The protein is Acetyl-CoA decarbonylase/synthase complex subunit delta of Methanocaldococcus jannaschii (strain ATCC 43067 / DSM 2661 / JAL-1 / JCM 10045 / NBRC 100440) (Methanococcus jannaschii).